The sequence spans 700 residues: Long chain acyl-CoA synthetase 7, peroxisomal (700 aa).

Residues 1-29 form a disordered region; the sequence is MEFASPEQRRLETIRSHIDTSPTNDQSSS. Positions 7–18 are enriched in basic and acidic residues; it reads EQRRLETIRSHI. Residues 10–18 carry the Microbody targeting signal motif; sequence RLETIRSHI. Residues 19-29 are compositionally biased toward polar residues; sequence DTSPTNDQSSS. 266–277 provides a ligand contact to ATP; sequence ICYTSGTTGTPK. The interval 526–550 is fatty acid-binding; that stretch reads DGWLHTGDIGLWLPGGRLKIIDRKK. The short motif at 698 to 700 is the Microbody targeting signal element; it reads SKL.

The protein belongs to the ATP-dependent AMP-binding enzyme family. Interacts with PEX5. Mg(2+) serves as cofactor. In terms of tissue distribution, expressed in roots, stems, leaves flowers and germinating seedling. Preferentially expressed in seeds.

The protein resides in the peroxisome. The enzyme catalyses a long-chain fatty acid + ATP + CoA = a long-chain fatty acyl-CoA + AMP + diphosphate. It catalyses the reaction decanoate + ATP + CoA = decanoyl-CoA + AMP + diphosphate. It carries out the reaction dodecanoate + ATP + CoA = dodecanoyl-CoA + AMP + diphosphate. The catalysed reaction is tetradecanoate + ATP + CoA = tetradecanoyl-CoA + AMP + diphosphate. The enzyme catalyses hexadecanoate + ATP + CoA = hexadecanoyl-CoA + AMP + diphosphate. It catalyses the reaction (9Z)-octadecenoate + ATP + CoA = (9Z)-octadecenoyl-CoA + AMP + diphosphate. It carries out the reaction (9Z,12Z)-octadecadienoate + ATP + CoA = (9Z,12Z)-octadecadienoyl-CoA + AMP + diphosphate. The catalysed reaction is (9Z,12Z,15Z)-octadecatrienoate + ATP + CoA = (9Z,12Z,15Z)-octadecatrienoyl-CoA + AMP + diphosphate. It participates in lipid metabolism; fatty acid metabolism. Its function is as follows. Activation of long-chain fatty acids for both synthesis of cellular lipids, and degradation via beta-oxidation. Preferentially uses palmitate, palmitoleate, oleate, linoleate and eicosenoate as substrates. Can use myristate and linolenate as substrates. Functions redundantly with LACS6 in lipid mobilization for beta-oxidation during seed germination, which is essential for postgerminative growth and seedling establishment. This is Long chain acyl-CoA synthetase 7, peroxisomal from Arabidopsis thaliana (Mouse-ear cress).